The chain runs to 97 residues: Large ribosomal subunit protein uL23 (97 aa).

The protein belongs to the universal ribosomal protein uL23 family. In terms of assembly, part of the 50S ribosomal subunit. Contacts protein L29, and trigger factor when it is bound to the ribosome.

Functionally, one of the early assembly proteins it binds 23S rRNA. One of the proteins that surrounds the polypeptide exit tunnel on the outside of the ribosome. Forms the main docking site for trigger factor binding to the ribosome. The chain is Large ribosomal subunit protein uL23 from Allorhizobium ampelinum (strain ATCC BAA-846 / DSM 112012 / S4) (Agrobacterium vitis (strain S4)).